Consider the following 477-residue polypeptide: Shikimate biosynthesis protein AroDE (477 aa).

The interval 1 to 209 (MLCATVSGPS…LEELLSYNYS (209 aa)) is 3-dehydroquinate dehydratase. 3-dehydroquinate contacts are provided by residues serine 21, 29–31 (ELR), and 56–58 (TFR). The Proton donor/acceptor; for 3-dehydroquinate dehydratase activity role is filled by histidine 111. Lysine 134 serves as the catalytic Schiff-base intermediate with substrate; for 3-dehydroquinate dehydratase activity. 3-dehydroquinate-binding residues include arginine 172 and glutamine 197. Residues 210 to 477 (KLSEKSHIYG…NYVKNFMAKV (268 aa)) form a shikimate 5-dehydrogenase region. 228–230 (SIS) provides a ligand contact to shikimate. The active-site Proton acceptor; for shikimate dehydrogenase activity is the lysine 279. Residues asparagine 300 and aspartate 315 each coordinate shikimate. NADP(+) contacts are provided by residues 339 to 343 (GAGGA), 362 to 364 (NRT), and glycine 438. Glutamine 445 provides a ligand contact to shikimate.

In the N-terminal section; belongs to the type-I 3-dehydroquinase family. The protein in the C-terminal section; belongs to the shikimate dehydrogenase family.

The enzyme catalyses 3-dehydroquinate = 3-dehydroshikimate + H2O. It carries out the reaction shikimate + NADP(+) = 3-dehydroshikimate + NADPH + H(+). Its pathway is metabolic intermediate biosynthesis; chorismate biosynthesis; chorismate from D-erythrose 4-phosphate and phosphoenolpyruvate: step 3/7. The protein operates within metabolic intermediate biosynthesis; chorismate biosynthesis; chorismate from D-erythrose 4-phosphate and phosphoenolpyruvate: step 4/7. Its function is as follows. Bifunctional enzyme that catalyzes two sequential steps of the aromatic amino acids biosynthetic pathway. In the first reaction, the AroD domain catalyzes the cis-dehydration of 3-dehydroquinate (DHQ) and introduces the first double bond of the aromatic ring to yield 3-dehydroshikimate; in the second reaction, the AroE domain catalyzes the reversible NADPH linked reduction of 3-dehydroshikimate (DHSA) to yield shikimate (SA). This Chlamydia pneumoniae (Chlamydophila pneumoniae) protein is Shikimate biosynthesis protein AroDE.